The primary structure comprises 92 residues: Small ribosomal subunit protein uS19 (92 aa).

This sequence belongs to the universal ribosomal protein uS19 family.

Protein S19 forms a complex with S13 that binds strongly to the 16S ribosomal RNA. The chain is Small ribosomal subunit protein uS19 from Shewanella amazonensis (strain ATCC BAA-1098 / SB2B).